We begin with the raw amino-acid sequence, 447 residues long: Acyl-lipid (7-3)-desaturase (447 aa).

One can recognise a Cytochrome b5 heme-binding domain in the interval 36 to 94 (LTIVGDSVYDAKAFRSEHPGGAHFVSLFGGRDATEAFMEYHRRAWPKSRMSRFHVGSLA). The heme site is built by His53 and His76. Helical transmembrane passes span 123-143 (GFAP…AIAL), 154-174 (LLPS…IQHD), and 185-205 (SVNL…ILWL). The short motif at 173-177 (HDANH) is the Histidine box-1 element. Positions 208–213 (HVVMHH) match the Histidine box-2 motif. Helical transmembrane passes span 244 to 264 (WLQH…LLFL), 286 to 306 (LFMP…ALPL), and 315 to 335 (AVCI…FFFI). The Histidine box-3 motif lies at 386-390 (QIEHH).

It belongs to the fatty acid desaturase type 1 family. Requires Fe(2+) as cofactor.

It is found in the membrane. The enzyme catalyses a (7Z,10Z,13Z,16Z,19Z)-docosapentaenoyl-containing glycerolipid + 2 Fe(II)-[cytochrome b5] + O2 + 2 H(+) = a (4Z,7Z,10Z,13Z,16Z,19Z)-docosahexaenoyl-containing glycerolipid + 2 Fe(III)-[cytochrome b5] + 2 H2O. It carries out the reaction a (7Z,10Z,13Z,16Z)-docosatetraenoyl-containing glycerolipid + 2 Fe(II)-[cytochrome b5] + O2 + 2 H(+) = a (4Z,7Z,10Z,13Z,16Z)-docosapentaenoyl-containing glycerolipid + 2 Fe(III)-[cytochrome b5] + 2 H2O. Fatty acid desaturase that introduces a cis double bond at the 4-position in 22-carbon polyunsaturated fatty acids that contain a Delta(7) double bond, resulting in the production of delta-4 desaturated fatty acid docosahexanoic acid (DHA). This chain is Acyl-lipid (7-3)-desaturase, found in Rebecca salina (Marine microalga).